Consider the following 346-residue polypeptide: Phosphoribosylformylglycinamidine cyclo-ligase (346 aa).

It belongs to the AIR synthase family.

It is found in the cytoplasm. It carries out the reaction 2-formamido-N(1)-(5-O-phospho-beta-D-ribosyl)acetamidine + ATP = 5-amino-1-(5-phospho-beta-D-ribosyl)imidazole + ADP + phosphate + H(+). It participates in purine metabolism; IMP biosynthesis via de novo pathway; 5-amino-1-(5-phospho-D-ribosyl)imidazole from N(2)-formyl-N(1)-(5-phospho-D-ribosyl)glycinamide: step 2/2. The chain is Phosphoribosylformylglycinamidine cyclo-ligase from Geobacillus thermodenitrificans (strain NG80-2).